A 363-amino-acid chain; its full sequence is DNA replication and repair protein RecF (363 aa).

30 to 37 (GDNAQGKT) contacts ATP.

Belongs to the RecF family.

It is found in the cytoplasm. In terms of biological role, the RecF protein is involved in DNA metabolism; it is required for DNA replication and normal SOS inducibility. RecF binds preferentially to single-stranded, linear DNA. It also seems to bind ATP. The polypeptide is DNA replication and repair protein RecF (Lachnospira eligens (strain ATCC 27750 / DSM 3376 / VPI C15-48 / C15-B4) (Eubacterium eligens)).